The primary structure comprises 341 residues: Mitochondrial dimethyladenosine transferase 1 (341 aa).

The N-terminal 27 residues, 1-27 (MASSRTLGTFRLPPLPTIREIIKLFRL), are a transit peptide targeting the mitochondrion. 7 residues coordinate S-adenosyl-L-methionine: leucine 38, glycine 63, glutamate 85, lysine 86, aspartate 111, valine 112, and asparagine 141.

The protein belongs to the class I-like SAM-binding methyltransferase superfamily. rRNA adenine N(6)-methyltransferase family. KsgA subfamily. In terms of assembly, interacts with mitochondrial RNA polymerase POLRMT. Interacts with TFAM. Bound to the maturing mtSSU until the late stages of assembly.

Its subcellular location is the mitochondrion. The catalysed reaction is adenosine(N)/adenosine(N+1) in rRNA + 4 S-adenosyl-L-methionine = N(6)-dimethyladenosine(N)/N(6)-dimethyladenosine(N+1) in rRNA + 4 S-adenosyl-L-homocysteine + 4 H(+). Functionally, mitochondrial methyltransferase which uses S-adenosyl methionine to dimethylate two highly conserved adjacent adenosine residues (A1583 and A1584) within the loop of helix 45 at the 3-prime end of 12S rRNA, thereby regulating the assembly or stability of the small subunit of the mitochondrial ribosome. Also required for basal transcription of mitochondrial DNA, probably via its interaction with POLRMT and TFAM. Stimulates transcription independently of the methyltransferase activity. This is Mitochondrial dimethyladenosine transferase 1 (TFB1M) from Bos taurus (Bovine).